The chain runs to 224 residues: Adenylate kinase (224 aa).

10 to 15 (GSGKST) is a binding site for ATP. The interval 30–59 (SSGDLIRREIERKSSLGREMEAYLSRGDLI) is NMP. Residues Ser-31, Arg-36, 57–59 (DLI), 83–86 (GYPR), and Gln-90 contribute to the AMP site. The tract at residues 124–161 (GRRICPNCGAVYHVKYNPPKVPGICDVCGSELIQRADD) is LID. ATP is bound at residue Arg-125. Cys-128 and Cys-131 together coordinate Zn(2+). An ATP-binding site is contributed by 134-135 (VY). Residues Cys-148 and Cys-151 each contribute to the Zn(2+) site. Positions 158 and 169 each coordinate AMP. Residue Gly-197 participates in ATP binding.

This sequence belongs to the adenylate kinase family. In terms of assembly, monomer.

The protein localises to the cytoplasm. It carries out the reaction AMP + ATP = 2 ADP. Its pathway is purine metabolism; AMP biosynthesis via salvage pathway; AMP from ADP: step 1/1. Functionally, catalyzes the reversible transfer of the terminal phosphate group between ATP and AMP. Plays an important role in cellular energy homeostasis and in adenine nucleotide metabolism. In Thermococcus kodakarensis (strain ATCC BAA-918 / JCM 12380 / KOD1) (Pyrococcus kodakaraensis (strain KOD1)), this protein is Adenylate kinase.